A 365-amino-acid polypeptide reads, in one-letter code: Transcription elongation factor, mitochondrial (365 aa).

The N-terminal 40 residues, 1–40, are a transit peptide targeting the mitochondrion; that stretch reads MAWRANLACLIKAGGRTRWFPLPEYLSMSPVLHNTCSRRK.

This sequence belongs to the TEFM family. Interacts with POLRMT.

It is found in the mitochondrion matrix. The protein resides in the mitochondrion nucleoid. In terms of biological role, transcription elongation factor which increases mitochondrial RNA polymerase processivity. Regulates transcription of the mitochondrial genome, including genes important for the oxidative phosphorylation machinery. This chain is Transcription elongation factor, mitochondrial (Tefm), found in Rattus norvegicus (Rat).